The sequence spans 875 residues: Pyrogallol hydroxytransferase large subunit (875 aa).

Positions 82–104 (RKSFDPNGERNPQLRGAGLSKQD) are disordered. Ser175 provides a ligand contact to Mo-bis(molybdopterin guanine dinucleotide).

It belongs to the prokaryotic molybdopterin-containing oxidoreductase family. As to quaternary structure, heterodimer of a large and a small subunit. Requires Mo-bis(molybdopterin guanine dinucleotide) as cofactor.

The enzyme catalyses 1,2,3,5-tetrahydroxybenzene + 1,2,3-trihydroxybenzene = 1,2,3,5-tetrahydroxybenzene + 1,3,5-trihydroxybenzene. Its function is as follows. Isomerization of pyrogallol to phloroglucin. The polypeptide is Pyrogallol hydroxytransferase large subunit (athL) (Pelobacter acidigallici).